A 620-amino-acid polypeptide reads, in one-letter code: Estrogen receptor (620 aa).

2 stretches are compositionally biased toward polar residues: residues 1–10 and 101–111; these read MSKRQSSVQI and GSLQSLGSGPT. 2 disordered regions span residues 1–55 and 88–111; these read MSKR…RGSG and YSAPLETNGPPSEGSLQSLGSGPT. Positions 1-185 are modulating; the sequence is MSKRQSSVQI…GFEMAKDTRF (185 aa). 2 NR C4-type zinc fingers span residues 186–206 and 222–246; these read CAVCSDYASGYHYGVWSCEGC and CPATNQCTIDRNRRKSCQACRLRKC. A DNA-binding region (nuclear receptor) is located at residues 186–251; it reads CAVCSDYASG…RLRKCYEVGM (66 aa). The segment at 252–314 is hinge; the sequence is MKGGVRKDRI…GGGRLSVTSI (63 aa). The interval 286 to 308 is disordered; the sequence is KTVHYDGRKRSSTGGGGGGGGGR. The segment covering 298-308 has biased composition (gly residues); that stretch reads TGGGGGGGGGR. One can recognise an NR LBD domain in the interval 315-551; sequence PPEQVLLLLQ…DLLLEMLDAH (237 aa). The disordered stretch occupies residues 558-620; that stretch reads RAPQSLSQVD…RPDCTPALQD (63 aa).

This sequence belongs to the nuclear hormone receptor family. NR3 subfamily. As to quaternary structure, binds DNA as a homodimer. Can form a heterodimer with ER-beta. In terms of tissue distribution, widely expressed in brain, ovary, testis, and female liver.

It is found in the nucleus. Its function is as follows. The steroid hormones and their receptors are involved in the regulation of eukaryotic gene expression and affect cellular proliferation and differentiation in target tissues. In Oryzias latipes (Japanese rice fish), this protein is Estrogen receptor (esr1).